Here is a 322-residue protein sequence, read N- to C-terminus: Putative nickel/cobalt efflux system HI_1248 (322 aa).

Transmembrane regions (helical) follow at residues 7-27 (GLVL…WFFL), 54-74 (AGTT…LGPG), 100-120 (LSSL…VVVL), 137-157 (TALL…LRAY), 228-248 (IFVL…LAVL), and 294-314 (LIAG…TTIS).

This sequence belongs to the NiCoT transporter (TC 2.A.52) family.

Its subcellular location is the cell membrane. Efflux system for nickel and cobalt. The protein is Putative nickel/cobalt efflux system HI_1248 of Haemophilus influenzae (strain ATCC 51907 / DSM 11121 / KW20 / Rd).